A 962-amino-acid polypeptide reads, in one-letter code: Putative RNA Helicase B962L (962 aa).

One can recognise a Helicase ATP-binding domain in the interval 43–229 (IPTSLADRVL…FGIGKENIIL (187 aa)). 56–63 (SRTGSGKS) provides a ligand contact to ATP. Positions 167–170 (DEAH) match the DEAH box motif. The Helicase C-terminal domain maps to 253–459 (ACETALTIHK…TIKKNKEGVF (207 aa)). Residues 521-541 (GYFWQAAISDIATILAVVSVA) traverse the membrane as a helical segment.

Belongs to the DEAD box helicase family. DEAH subfamily.

Its subcellular location is the host membrane. It localises to the virion. The catalysed reaction is ATP + H2O = ADP + phosphate + H(+). The chain is Putative RNA Helicase B962L from African swine fever virus (isolate Tick/South Africa/Pretoriuskop Pr4/1996) (ASFV).